The chain runs to 93 residues: C-C motif chemokine 3 (93 aa).

The N-terminal stretch at 1–24 (MKVAVAALAVLLCAMALCSQVFSA) is a signal peptide. 2 disulfides stabilise this stretch: Cys34/Cys58 and Cys35/Cys74.

The protein belongs to the intercrine beta (chemokine CC) family. In terms of assembly, self-associates. Also heterodimer of MIP-1-alpha(4-69) and MIP-1-beta(3-69). Interacts with CCR1.

It is found in the secreted. Functionally, monokine with inflammatory and chemokinetic properties. Binds to CCR1, CCR4 and CCR5. One of the major HIV-suppressive factors produced by CD8+ T-cells. Recombinant MIP-1-alpha induces a dose-dependent inhibition of different strains of HIV-1, HIV-2, and simian immunodeficiency virus (SIV). The protein is C-C motif chemokine 3 (CCL3) of Bos taurus (Bovine).